The sequence spans 312 residues: MTRHFLRDDDLSPAEQVEVLDLAAKLKRDRFSARPLAGPQTVAVMFDKTSTRTRLSFATGIADLGGNPLIIQAGESQVGAKESLADTARVMERMLAAIVWRTFAHSGLEELVDGTRIPVVNALSDDVHPCQTLADLQTVRERKGRTAGLTMSFFGDGASNMAHSSLLGGVTAGMRVRIAAPAGYTPDPRFVADAEAIAARTGGSVLVTADPGEAAAGADVIVTDTWVSMGKEDEKAERIAVFGDYAVNAGTLRLADPAAIFLHCLPAYRGLEVSAYVIDGPQSVVWDEAENRLHAQKALLTWLLAKNREDAV.

Carbamoyl phosphate contacts are provided by residues 50–53, glutamine 77, arginine 101, and 128–131; these read STRT and HPCQ. L-ornithine is bound by residues asparagine 160, aspartate 224, and 228-229; that span reads SM. Carbamoyl phosphate contacts are provided by residues 264 to 265 and arginine 292; that span reads CL.

Belongs to the aspartate/ornithine carbamoyltransferase superfamily. OTCase family.

The protein localises to the cytoplasm. It carries out the reaction carbamoyl phosphate + L-ornithine = L-citrulline + phosphate + H(+). Its pathway is amino-acid biosynthesis; L-arginine biosynthesis; L-arginine from L-ornithine and carbamoyl phosphate: step 1/3. Its function is as follows. Reversibly catalyzes the transfer of the carbamoyl group from carbamoyl phosphate (CP) to the N(epsilon) atom of ornithine (ORN) to produce L-citrulline. This chain is Ornithine carbamoyltransferase, found in Leifsonia xyli subsp. xyli (strain CTCB07).